The primary structure comprises 122 residues: Large ribosomal subunit protein eL34 (122 aa).

It belongs to the eukaryotic ribosomal protein eL34 family.

This chain is Large ribosomal subunit protein eL34 (rpl34), found in Dictyostelium discoideum (Social amoeba).